The following is a 346-amino-acid chain: Methylthioribose-1-phosphate isomerase (346 aa).

Substrate contacts are provided by residues 54-56 (RGA), Arg91, and Gln192. Asp233 functions as the Proton donor in the catalytic mechanism. 243–244 (NK) is a binding site for substrate.

It belongs to the eIF-2B alpha/beta/delta subunits family. MtnA subfamily.

The catalysed reaction is 5-(methylsulfanyl)-alpha-D-ribose 1-phosphate = 5-(methylsulfanyl)-D-ribulose 1-phosphate. Its pathway is amino-acid biosynthesis; L-methionine biosynthesis via salvage pathway; L-methionine from S-methyl-5-thio-alpha-D-ribose 1-phosphate: step 1/6. Functionally, catalyzes the interconversion of methylthioribose-1-phosphate (MTR-1-P) into methylthioribulose-1-phosphate (MTRu-1-P). The polypeptide is Methylthioribose-1-phosphate isomerase (Yersinia pseudotuberculosis serotype IB (strain PB1/+)).